The sequence spans 239 residues: L-cystine transport system permease protein TcyL (239 aa).

Residues 21 to 216 (LPVTLYILTL…AVAVLFEWFF (196 aa)) enclose the ABC transmembrane type-1 domain. 4 helical membrane-spanning segments follow: residues 25-45 (LYIL…LALP), 69-89 (IMVQ…LIGI), 96-116 (PFYA…AEII), and 196-216 (EVYI…EWFF).

It belongs to the binding-protein-dependent transport system permease family. The complex is composed of two ATP-binding proteins (TcyN), two transmembrane proteins (TcyL and TcyM) and two solute-binding proteins (TcyJ and TcyK).

It localises to the cell membrane. Its function is as follows. Part of the ABC transporter complex TcyJKLMN involved in L-cystine import. Probably responsible for the translocation of the substrate across the membrane. Is also involved in cystathionine, djenkolate, and S-methylcysteine transport. This is L-cystine transport system permease protein TcyL (tcyL) from Bacillus subtilis (strain 168).